The sequence spans 836 residues: Protein-glutamine gamma-glutamyltransferase K (836 aa).

Residues 1-33 (MDGPRSDMGRSDVSRSDMSRSDMGRSDMGRSDV) are compositionally biased toward basic and acidic residues. Disordered stretches follow at residues 1–68 (MDGP…SRGG) and 89–125 (DDWG…DGTI). Thr-46 carries the phosphothreonine modification. Ser-48, Ser-98, and Ser-112 each carry phosphoserine. Over residues 89 to 112 (DDWGREPSDSRDRGSSSRGGRPDS) the composition is skewed to basic and acidic residues. Catalysis depends on residues Cys-397, His-456, and Asp-479. Residues Asn-519, Asp-521, Glu-568, and Glu-573 each contribute to the Ca(2+) site. Ser-824 is modified (phosphoserine).

Belongs to the transglutaminase superfamily. Transglutaminase family. Interacts with PLAAT4. It depends on Ca(2+) as a cofactor. Post-translationally, palmitoylated. In terms of processing, the membrane anchorage region possesses a cluster of five cysteines within which fatty acid(s) may become thioester-linked. It is subject to phorbol ester-stimulated phosphorylation and is hypersensitive to proteolysis, which releases the enzyme in a soluble form. Tyrosine-phosphorylated.

Its subcellular location is the membrane. It catalyses the reaction L-glutaminyl-[protein] + L-lysyl-[protein] = [protein]-L-lysyl-N(6)-5-L-glutamyl-[protein] + NH4(+). With respect to regulation, inhibited by retinoic acid, but phorbol ester treatment activates it. Catalyzes the cross-linking of proteins and the conjugation of polyamines to proteins. Responsible for cross-linking epidermal proteins during formation of the stratum corneum. Involved in cell proliferation. This Oryctolagus cuniculus (Rabbit) protein is Protein-glutamine gamma-glutamyltransferase K (TGM1).